Reading from the N-terminus, the 179-residue chain is Putative ankyrin repeat protein RF_0922 (179 aa).

ANK repeat units lie at residues 5–34 (KGCTALTWAVDKGLEKVCEILIPNMSEQAI), 40–72 (NGSTALTLAAWKGLEKICRLLIPKMSPQAINHV), 75–104 (NGNTALTLAAWKGLEKICELLIPKMSSQAI), 110–139 (NGDTALTLAAWKGLEKICEMLIPKMSEQAI), and 145–174 (NGNTALTLAADKSLEKICEMLIPKMSKQAI).

The polypeptide is Putative ankyrin repeat protein RF_0922 (Rickettsia felis (strain ATCC VR-1525 / URRWXCal2) (Rickettsia azadi)).